Here is a 218-residue protein sequence, read N- to C-terminus: GTP cyclohydrolase 1 (218 aa).

Zn(2+) contacts are provided by Cys109, His112, and Cys180.

The protein belongs to the GTP cyclohydrolase I family. In terms of assembly, toroid-shaped homodecamer, composed of two pentamers of five dimers.

It catalyses the reaction GTP + H2O = 7,8-dihydroneopterin 3'-triphosphate + formate + H(+). Its pathway is cofactor biosynthesis; 7,8-dihydroneopterin triphosphate biosynthesis; 7,8-dihydroneopterin triphosphate from GTP: step 1/1. The chain is GTP cyclohydrolase 1 from Aeromonas hydrophila subsp. hydrophila (strain ATCC 7966 / DSM 30187 / BCRC 13018 / CCUG 14551 / JCM 1027 / KCTC 2358 / NCIMB 9240 / NCTC 8049).